Here is a 315-residue protein sequence, read N- to C-terminus: Acetyl-coenzyme A carboxylase carboxyl transferase subunit alpha (315 aa).

In terms of domain architecture, CoA carboxyltransferase C-terminal spans 40-293 (LEDKKIALTK…KKNVLAALDR (254 aa)).

It belongs to the AccA family. As to quaternary structure, acetyl-CoA carboxylase is a heterohexamer composed of biotin carboxyl carrier protein (AccB), biotin carboxylase (AccC) and two subunits each of ACCase subunit alpha (AccA) and ACCase subunit beta (AccD).

It localises to the cytoplasm. It carries out the reaction N(6)-carboxybiotinyl-L-lysyl-[protein] + acetyl-CoA = N(6)-biotinyl-L-lysyl-[protein] + malonyl-CoA. Its pathway is lipid metabolism; malonyl-CoA biosynthesis; malonyl-CoA from acetyl-CoA: step 1/1. In terms of biological role, component of the acetyl coenzyme A carboxylase (ACC) complex. First, biotin carboxylase catalyzes the carboxylation of biotin on its carrier protein (BCCP) and then the CO(2) group is transferred by the carboxyltransferase to acetyl-CoA to form malonyl-CoA. In Marinomonas sp. (strain MWYL1), this protein is Acetyl-coenzyme A carboxylase carboxyl transferase subunit alpha.